We begin with the raw amino-acid sequence, 452 residues long: Metacaspase-1 (452 aa).

Positions 1–97 (MYPGAGRPTY…GPPLQGRPRD (97 aa)) are disordered. The span at 16–41 (QKGPYGQPQYQQQYAPPYPERYQQPY) shows a compositional bias: low complexity. Active-site residues include H238 and C294.

It belongs to the peptidase C14B family.

Its function is as follows. Involved in cell death (apoptosis). This is Metacaspase-1 (MCA1) from Eremothecium gossypii (strain ATCC 10895 / CBS 109.51 / FGSC 9923 / NRRL Y-1056) (Yeast).